The following is a 226-amino-acid chain: Protein AhpA (226 aa).

2 helical membrane passes run serine 12–valine 32 and glycine 169–leucine 189.

The protein belongs to the Smp family.

The protein localises to the cell inner membrane. Functionally, when anaerobically expressed in wild-type E.coli K12 confers a hemolytic phenotype, but not in an sheA mutant. Suggests it affects the expression of the latent E.coli K12 hemolysin sheA under anaerobic conditions. In Pasteurella multocida (strain Pm70), this protein is Protein AhpA (ahpA).